A 401-amino-acid polypeptide reads, in one-letter code: Phosphoglycerate kinase (401 aa).

Substrate is bound by residues 24–26 (DFN), arginine 40, 63–66 (HFGR), arginine 122, and arginine 155. Residues lysine 206, glycine 297, glutamate 328, and 357–360 (GGDS) each bind ATP.

It belongs to the phosphoglycerate kinase family. As to quaternary structure, monomer.

Its subcellular location is the cytoplasm. The catalysed reaction is (2R)-3-phosphoglycerate + ATP = (2R)-3-phospho-glyceroyl phosphate + ADP. It participates in carbohydrate degradation; glycolysis; pyruvate from D-glyceraldehyde 3-phosphate: step 2/5. This Synechococcus sp. (strain CC9605) protein is Phosphoglycerate kinase.